Reading from the N-terminus, the 464-residue chain is Glutamate decarboxylase beta (464 aa).

Lysine 275 carries the N6-(pyridoxal phosphate)lysine modification.

The protein belongs to the group II decarboxylase family. It depends on pyridoxal 5'-phosphate as a cofactor.

It carries out the reaction L-glutamate + H(+) = 4-aminobutanoate + CO2. Functionally, converts internalized glutamate to GABA and increases the internal pH. Involved in glutamate-dependent acid resistance in gastric fluid. This Listeria monocytogenes serovar 1/2a (strain ATCC BAA-679 / EGD-e) protein is Glutamate decarboxylase beta (gadB).